The primary structure comprises 181 residues: Large ribosomal subunit protein uL5 (181 aa).

Belongs to the universal ribosomal protein uL5 family. Part of the 50S ribosomal subunit; part of the 5S rRNA/L5/L18/L25 subcomplex. Contacts the 5S rRNA and the P site tRNA. Forms a bridge to the 30S subunit in the 70S ribosome.

Functionally, this is one of the proteins that bind and probably mediate the attachment of the 5S RNA into the large ribosomal subunit, where it forms part of the central protuberance. In the 70S ribosome it contacts protein S13 of the 30S subunit (bridge B1b), connecting the 2 subunits; this bridge is implicated in subunit movement. Contacts the P site tRNA; the 5S rRNA and some of its associated proteins might help stabilize positioning of ribosome-bound tRNAs. This is Large ribosomal subunit protein uL5 from Campylobacter hominis (strain ATCC BAA-381 / DSM 21671 / CCUG 45161 / LMG 19568 / NCTC 13146 / CH001A).